The following is a 741-amino-acid chain: Zinc transporter ZIP6 (741 aa).

The signal sequence occupies residues 1-20; sequence MATNLSVIMILTFALWVTNP. The Extracellular portion of the chain corresponds to 21–311; the sequence is LHELQSTAAF…PKTYSLQIAW (291 aa). A glycan (N-linked (GlcNAc...) asparagine) is linked at asparagine 68. The span at 95-111 shows a compositional bias: basic and acidic residues; the sequence is HDHERHSDHERHSDHER. Disordered stretches follow at residues 95–172 and 189–213; these read HDHE…EVTS and ETPKPGRRTKDINPSTPPSITEKSR. Residues 135–147 are compositionally biased toward polar residues; it reads DNSGKNPNTSQGK. Asparagine 142 is a glycosylation site (N-linked (GlcNAc...) asparagine). Residues 150–162 show a composition bias toward basic and acidic residues; the sequence is RPAEHVNGRRNGK. Residues 163–172 show a composition bias toward low complexity; it reads ESASSSEVTS. The span at 200–209 shows a compositional bias: polar residues; sequence INPSTPPSIT. N-linked (GlcNAc...) asparagine glycosylation is found at asparagine 226, asparagine 251, and asparagine 268. Residues 312–332 traverse the membrane as a helical segment; the sequence is LGGFIAISIISFLSLLGVILV. The Cytoplasmic segment spans residues 333 to 341; the sequence is PLMNRVFFK. A helical transmembrane segment spans residues 342 to 362; that stretch reads FLLSFLVALAVGTLSGDALLH. Residues 363-409 are Extracellular-facing; the sequence is LLPHSHASHHHSHSHEEPAMEMKRGPLFSHLSAQNLEESSYFDSTWK. The chain crosses the membrane as a helical span at residues 410-430; that stretch reads GLTALGGLYFMFLVEHVLTLI. Topologically, residues 431-643 are cytoplasmic; it reads KQFKDKKKKN…LKAGMTVKQA (213 aa). Residues 434 to 494 are disordered; that stretch reads KDKKKKNQKK…QEPSPFDSQQ (61 aa). Residues 450-475 are a coiled coil; sequence VESKKQLSKYESQLSTNEEKVDTGER. Phosphoserine is present on residues serine 457 and serine 464. Basic and acidic residues predominate over residues 466–477; sequence NEEKVDTGERPE. The segment covering 481–494 has biased composition (polar residues); sequence QADSQEPSPFDSQQ. Residues 644 to 664 form a helical membrane-spanning segment; that stretch reads VLYNALSAMLAYLGMATGIFI. The Extracellular portion of the chain corresponds to 665–672; the sequence is GHYAENVS. An N-linked (GlcNAc...) asparagine glycan is attached at asparagine 670. The helical transmembrane segment at 673 to 693 threads the bilayer; the sequence is MWIFALTAGLFMYVALVDMVP. Over 694–710 the chain is Cytoplasmic; it reads EMLHNDASDHGCSRWGY. A helical membrane pass occupies residues 711-731; that stretch reads FFLQNAGILLGFGIMLLISIF. Residues 732–741 lie on the Extracellular side of the membrane; that stretch reads EHKIVFRINF.

Belongs to the ZIP transporter (TC 2.A.5) family. In terms of assembly, interacts with SLC39A10; which triggers cells to undergo EMT and mitosis. Found in a complex with SLC39A6, SLC39A10 and with the 'Ser-727' phosphorylated form of STAT3 throughout mitosis. Found in a complex with SLC39A6, SLC39A10 and with NCAM1; this complex controls NCAM1 phosphorylation and integration into focal adhesion complexes during epithelial-to-mesenchymal transition (EMT). Found in a complex with SLC39A6, SLC39A10 and with GSK3B that controls NCAM1 phosphorylation. In terms of processing, cleaved on the N-terminus before locating to the plasma membrane. Post-translationally, N-glycosylated. Phosphorylated by ZAP70 in response to TCR stimulation leading to its activation. Expressed in the endothelial cells of the brain capillaries.

The protein localises to the cell membrane. It localises to the cell projection. Its subcellular location is the lamellipodium membrane. The protein resides in the membrane raft. It is found in the apical cell membrane. It catalyses the reaction Zn(2+)(in) = Zn(2+)(out). In terms of biological role, zinc-influx transporter which plays a role in zinc homeostasis and in the induction of epithelial-to-mesenchymal transition (EMT). When associated with SLC39A10, the heterodimer formed by SLC39A10 and SLC39A6 mediates cellular zinc uptake to trigger cells to undergo epithelial- to-mesenchymal transition (EMT). The SLC39A10-SLC39A6 heterodimer also controls NCAM1 phosphorylation and its integration into focal adhesion complexes during EMT. Zinc influx inactivates GSK3B, enabling unphosphorylated SNAI1 in the nucleus to down-regulate adherence genes such as CDH1, causing loss of cell adherence. In addition, the SLC39A10-SLC39A6 heterodimer plays an essentiel role in initiating mitosis by importing zinc into cells to initiate a pathway resulting in the onset of mitosis. Participates in the T-cell receptor signaling regulation by mediating cellular zinc uptake into activated lymphocytes. Regulates the zinc influx necessary for proper meiotic progression to metaphase II (MII) that allows the oocyte-to-egg transition. The polypeptide is Zinc transporter ZIP6 (Rattus norvegicus (Rat)).